We begin with the raw amino-acid sequence, 201 residues long: 3-isopropylmalate dehydratase small subunit (201 aa).

This sequence belongs to the LeuD family. LeuD type 1 subfamily. As to quaternary structure, heterodimer of LeuC and LeuD.

The enzyme catalyses (2R,3S)-3-isopropylmalate = (2S)-2-isopropylmalate. It participates in amino-acid biosynthesis; L-leucine biosynthesis; L-leucine from 3-methyl-2-oxobutanoate: step 2/4. Catalyzes the isomerization between 2-isopropylmalate and 3-isopropylmalate, via the formation of 2-isopropylmaleate. The chain is 3-isopropylmalate dehydratase small subunit from Cereibacter sphaeroides (strain ATCC 17029 / ATH 2.4.9) (Rhodobacter sphaeroides).